A 191-amino-acid polypeptide reads, in one-letter code: Ribosome maturation factor RimM (191 aa).

One can recognise a PRC barrel domain in the interval 107 to 184 (EDDEWHQDDL…LVLVSPPPGL (78 aa)).

This sequence belongs to the RimM family. Binds ribosomal protein uS19.

The protein resides in the cytoplasm. Functionally, an accessory protein needed during the final step in the assembly of 30S ribosomal subunit, possibly for assembly of the head region. Essential for efficient processing of 16S rRNA. May be needed both before and after RbfA during the maturation of 16S rRNA. It has affinity for free ribosomal 30S subunits but not for 70S ribosomes. The sequence is that of Ribosome maturation factor RimM from Kocuria rhizophila (strain ATCC 9341 / DSM 348 / NBRC 103217 / DC2201).